Consider the following 709-residue polypeptide: Phosphoribosylformylglycinamidine synthase subunit PurL (709 aa).

The active site involves H36. Y39 and K80 together coordinate ATP. Mg(2+) is bound at residue E82. Residues 83-86 and R105 contribute to the substrate site; that span reads SHNH. The Proton acceptor role is filled by H84. D106 contributes to the Mg(2+) binding site. Residue Q226 coordinates substrate. D252 is a Mg(2+) binding site. 294 to 296 is a substrate binding site; sequence ETQ. D470 and G507 together coordinate ATP. S510 is a binding site for substrate.

Belongs to the FGAMS family. As to quaternary structure, monomer. Part of the FGAM synthase complex composed of 1 PurL, 1 PurQ and 2 PurS subunits.

The protein resides in the cytoplasm. It catalyses the reaction N(2)-formyl-N(1)-(5-phospho-beta-D-ribosyl)glycinamide + L-glutamine + ATP + H2O = 2-formamido-N(1)-(5-O-phospho-beta-D-ribosyl)acetamidine + L-glutamate + ADP + phosphate + H(+). Its pathway is purine metabolism; IMP biosynthesis via de novo pathway; 5-amino-1-(5-phospho-D-ribosyl)imidazole from N(2)-formyl-N(1)-(5-phospho-D-ribosyl)glycinamide: step 1/2. Its function is as follows. Part of the phosphoribosylformylglycinamidine synthase complex involved in the purines biosynthetic pathway. Catalyzes the ATP-dependent conversion of formylglycinamide ribonucleotide (FGAR) and glutamine to yield formylglycinamidine ribonucleotide (FGAM) and glutamate. The FGAM synthase complex is composed of three subunits. PurQ produces an ammonia molecule by converting glutamine to glutamate. PurL transfers the ammonia molecule to FGAR to form FGAM in an ATP-dependent manner. PurS interacts with PurQ and PurL and is thought to assist in the transfer of the ammonia molecule from PurQ to PurL. The sequence is that of Phosphoribosylformylglycinamidine synthase subunit PurL from Saccharolobus islandicus (strain M.16.4 / Kamchatka #3) (Sulfolobus islandicus).